Reading from the N-terminus, the 404-residue chain is Phosphoglycerate kinase (404 aa).

Substrate-binding positions include 22–24 (DLN), Arg-37, 60–63 (HLGR), Arg-119, and Arg-156. ATP-binding positions include Lys-206, Gly-302, Glu-333, and 359 to 362 (GGDS).

Belongs to the phosphoglycerate kinase family. In terms of assembly, monomer.

It localises to the cytoplasm. It carries out the reaction (2R)-3-phosphoglycerate + ATP = (2R)-3-phospho-glyceroyl phosphate + ADP. Its pathway is carbohydrate degradation; glycolysis; pyruvate from D-glyceraldehyde 3-phosphate: step 2/5. The protein is Phosphoglycerate kinase of Clavibacter michiganensis subsp. michiganensis (strain NCPPB 382).